Here is a 114-residue protein sequence, read N- to C-terminus: Fumarate reductase subunit D (114 aa).

3 helical membrane-spanning segments follow: residues 27–47, 50–70, and 94–114; these read ICFP…LIPM, IIVF…TIFP, and WLFY…VIAL.

This sequence belongs to the FrdD family. Part of an enzyme complex containing four subunits: a flavoprotein (FrdA), an iron-sulfur protein (FrdB), and two hydrophobic anchor proteins (FrdC and FrdD).

The protein resides in the cell inner membrane. Anchors the catalytic components of the fumarate reductase complex to the cell membrane, binds quinones. This chain is Fumarate reductase subunit D, found in Haemophilus ducreyi (strain 35000HP / ATCC 700724).